Here is a 345-residue protein sequence, read N- to C-terminus: Anthranilate phosphoribosyltransferase (345 aa).

Residues Gly79, 82–83 (GD), Thr87, 89–92 (NVST), 106–114 (KHGNRAVSG), and Ser118 contribute to the 5-phospho-alpha-D-ribose 1-diphosphate site. Gly79 lines the anthranilate pocket. Residue Ser91 participates in Mg(2+) binding. Asn109 provides a ligand contact to anthranilate. Arg164 contributes to the anthranilate binding site. Mg(2+)-binding residues include Asp223 and Glu224.

This sequence belongs to the anthranilate phosphoribosyltransferase family. In terms of assembly, homodimer. It depends on Mg(2+) as a cofactor.

It catalyses the reaction N-(5-phospho-beta-D-ribosyl)anthranilate + diphosphate = 5-phospho-alpha-D-ribose 1-diphosphate + anthranilate. It functions in the pathway amino-acid biosynthesis; L-tryptophan biosynthesis; L-tryptophan from chorismate: step 2/5. Its function is as follows. Catalyzes the transfer of the phosphoribosyl group of 5-phosphorylribose-1-pyrophosphate (PRPP) to anthranilate to yield N-(5'-phosphoribosyl)-anthranilate (PRA). The sequence is that of Anthranilate phosphoribosyltransferase from Saccharolobus islandicus (strain M.16.27) (Sulfolobus islandicus).